A 143-amino-acid chain; its full sequence is MAKKVSAYIKLQVGAGKANPSPPVGPALGQHGVNIMEFCKAFNAQTQEMEAGLPVPVVITVYNDRSFTFITKTPPAAVLLRKAAGIQKGSGEPNTKKVGTVTREQLEEIAKTKEPDLNAADLDAAVRSIAGTARSMGLDVEGL.

Belongs to the universal ribosomal protein uL11 family. As to quaternary structure, part of the ribosomal stalk of the 50S ribosomal subunit. Interacts with L10 and the large rRNA to form the base of the stalk. L10 forms an elongated spine to which L12 dimers bind in a sequential fashion forming a multimeric L10(L12)X complex. One or more lysine residues are methylated.

Functionally, forms part of the ribosomal stalk which helps the ribosome interact with GTP-bound translation factors. The sequence is that of Large ribosomal subunit protein uL11 from Alkalilimnicola ehrlichii (strain ATCC BAA-1101 / DSM 17681 / MLHE-1).